The chain runs to 257 residues: Dihydroorotate dehydrogenase B (NAD(+)), electron transfer subunit (257 aa).

In terms of domain architecture, FAD-binding FR-type spans 2–100; it reads ILIEDLTVVS…MGPQGNGFDI (99 aa). FAD is bound by residues 51–54, 68–70, and 75–76; these read RPIS, VYR, and GT. [2Fe-2S] cluster is bound by residues Cys220, Cys225, Cys228, and Cys244.

This sequence belongs to the PyrK family. As to quaternary structure, heterotetramer of 2 PyrK and 2 PyrD type B subunits. The cofactor is [2Fe-2S] cluster. Requires FAD as cofactor.

It participates in pyrimidine metabolism; UMP biosynthesis via de novo pathway; orotate from (S)-dihydroorotate (NAD(+) route): step 1/1. Its function is as follows. Responsible for channeling the electrons from the oxidation of dihydroorotate from the FMN redox center in the PyrD type B subunit to the ultimate electron acceptor NAD(+). This Streptococcus thermophilus (strain ATCC BAA-491 / LMD-9) protein is Dihydroorotate dehydrogenase B (NAD(+)), electron transfer subunit.